The chain runs to 164 residues: 3-isopropylmalate dehydratase small subunit (164 aa).

It belongs to the LeuD family. LeuD type 2 subfamily. Heterodimer of LeuC and LeuD.

It catalyses the reaction (2R,3S)-3-isopropylmalate = (2S)-2-isopropylmalate. It functions in the pathway amino-acid biosynthesis; L-leucine biosynthesis; L-leucine from 3-methyl-2-oxobutanoate: step 2/4. Functionally, catalyzes the isomerization between 2-isopropylmalate and 3-isopropylmalate, via the formation of 2-isopropylmaleate. This Syntrophus aciditrophicus (strain SB) protein is 3-isopropylmalate dehydratase small subunit.